Reading from the N-terminus, the 343-residue chain is Glycerol-3-phosphate dehydrogenase [NAD(P)+] (343 aa).

NADPH is bound by residues Ser-11, Trp-12, Arg-32, and Lys-106. 3 residues coordinate sn-glycerol 3-phosphate: Lys-106, Gly-137, and Ser-139. Ala-141 contributes to the NADPH binding site. Sn-glycerol 3-phosphate-binding residues include Lys-192, Asp-245, Ser-255, Arg-256, and Asn-257. The Proton acceptor role is filled by Lys-192. Residue Arg-256 coordinates NADPH. 2 residues coordinate NADPH: Val-280 and Glu-282.

The protein belongs to the NAD-dependent glycerol-3-phosphate dehydrogenase family.

The protein resides in the cytoplasm. It carries out the reaction sn-glycerol 3-phosphate + NAD(+) = dihydroxyacetone phosphate + NADH + H(+). The catalysed reaction is sn-glycerol 3-phosphate + NADP(+) = dihydroxyacetone phosphate + NADPH + H(+). The protein operates within membrane lipid metabolism; glycerophospholipid metabolism. Its function is as follows. Catalyzes the reduction of the glycolytic intermediate dihydroxyacetone phosphate (DHAP) to sn-glycerol 3-phosphate (G3P), the key precursor for phospholipid synthesis. The sequence is that of Glycerol-3-phosphate dehydrogenase [NAD(P)+] from Syntrophomonas wolfei subsp. wolfei (strain DSM 2245B / Goettingen).